A 290-amino-acid chain; its full sequence is PIH1 domain-containing protein 1 (290 aa).

3 positions are modified to phosphoserine: S12, S16, and S173.

It belongs to the PIH1 family. Component of the R2TP complex composed at least of RUVBL1, RUVBL2, RPAP3 and PIHD1. Component of the PAQosome complex which is responsible for the biogenesis of several protein complexes and which consists of R2TP complex members RUVBL1, RUVBL2, RPAP3 and PIH1D1, URI complex members PFDN2, PFDN6, PDRG1, UXT and URI1 as well as ASDURF, POLR2E and DNAAF10/WDR92. Interacts with phosphorylated TELO2. Mediates interaction of TELO2 with the R2TP complex. Interacts with phosphorylated ECD, EFTUD2/SNRP116, RPB1 and UBR5 and with RPB1 in a phosphorylation-independent manner. Interacts with the core C/D box snoRNP particle components NOP58 and FBL and with RUVBL1/TIP49. Interacts with RPAP3 and DNAAF10. Interacts with histone H4 and with SWI/SNF complex member SMARCB1/SNF5. Interacts with the mTORC1 complex member RPTOR. Interacts with isoform 1 of MSL1.

The protein resides in the nucleus. Involved in the assembly of C/D box small nucleolar ribonucleoprotein (snoRNP) particles. Recruits the SWI/SNF complex to the core promoter of rRNA genes and enhances pre-rRNA transcription. Mediates interaction of TELO2 with the R2TP complex which is necessary for the stability of MTOR and SMG1. Positively regulates the assembly and activity of the mTORC1 complex. This Mus musculus (Mouse) protein is PIH1 domain-containing protein 1 (Pih1d1).